The sequence spans 103 residues: Small ribosomal subunit protein uS10 (103 aa).

Belongs to the universal ribosomal protein uS10 family. As to quaternary structure, part of the 30S ribosomal subunit.

Its function is as follows. Involved in the binding of tRNA to the ribosomes. The sequence is that of Small ribosomal subunit protein uS10 from Alteromonas mediterranea (strain DSM 17117 / CIP 110805 / LMG 28347 / Deep ecotype).